Here is a 64-residue protein sequence, read N- to C-terminus: Large ribosomal subunit protein bL35 (64 aa).

The protein belongs to the bacterial ribosomal protein bL35 family.

This chain is Large ribosomal subunit protein bL35, found in Aliivibrio fischeri (strain ATCC 700601 / ES114) (Vibrio fischeri).